The following is a 2556-amino-acid chain: Ubiquitin carboxyl-terminal hydrolase 9Y (2556 aa).

Over residues Met1–Ile33 the composition is skewed to polar residues. A disordered region spans residues Met1–Pro68. The segment covering Ser34 to Pro44 has biased composition (low complexity). Ser587 is subject to Phosphoserine. Thr589 is subject to Phosphothreonine. The tract at residues Asn971–Ser999 is disordered. Low complexity predominate over residues Pro973 to Ser983. Residues Val1559 to Met1958 form the USP domain. Cys1568 (nucleophile) is an active-site residue. The Zn(2+) site is built by Cys1729, His1731, Cys1773, and Cys1776. Residue His1881 is the Proton acceptor of the active site. At Ser2447 the chain carries Phosphoserine. The tract at residues Gln2513–Gln2556 is disordered. The span at Lys2534 to Asn2545 shows a compositional bias: basic and acidic residues. Ser2549 carries the post-translational modification Phosphoserine.

This sequence belongs to the peptidase C19 family.

It catalyses the reaction Thiol-dependent hydrolysis of ester, thioester, amide, peptide and isopeptide bonds formed by the C-terminal Gly of ubiquitin (a 76-residue protein attached to proteins as an intracellular targeting signal).. It functions in the pathway protein modification; protein ubiquitination. Its function is as follows. Deubiquitinase that mediates deubiquitination of target proteins. May stabilize target proteins that are important for male germ cell development. This is Ubiquitin carboxyl-terminal hydrolase 9Y from Mus musculus (Mouse).